The sequence spans 92 residues: SPbeta prophage-derived uncharacterized protein YoqM (92 aa).

The first 25 residues, 1 to 25 (MKLRKVLTGSVLSLGLLVSASPAFA), serve as a signal peptide directing secretion.

This is SPbeta prophage-derived uncharacterized protein YoqM (yoqM) from Bacillus subtilis (strain 168).